A 131-amino-acid polypeptide reads, in one-letter code: Profilin-7 (131 aa).

The cysteines at positions 13 and 115 are disulfide-linked. Residues A81–T97 carry the Involved in PIP2 interaction motif. T111 carries the phosphothreonine modification.

The protein belongs to the profilin family. In terms of assembly, occurs in many kinds of cells as a complex with monomeric actin in a 1:1 ratio. Post-translationally, phosphorylated by MAP kinases.

It is found in the cytoplasm. The protein resides in the cytoskeleton. Functionally, binds to actin and affects the structure of the cytoskeleton. At high concentrations, profilin prevents the polymerization of actin, whereas it enhances it at low concentrations. In Olea europaea (Common olive), this protein is Profilin-7.